We begin with the raw amino-acid sequence, 325 residues long: uncharacterized protein (325 aa).

The segment at 1 to 75 (MSQPPEHPGN…PPPGYPTHLQ (75 aa)) is disordered. The segment covering 24–70 (YPPPGYGAPPPPPGYGPPPGTYLPPGYNAPPPPPGYGPPPGPPPPGY) has biased composition (pro residues). 4 helical membrane-spanning segments follow: residues 96 to 116 (AVTL…VIGA), 153 to 173 (IVMF…HAGI), 205 to 225 (LLIV…GLIF), and 273 to 293 (LVGE…AALI).

To M.tuberculosis Rv2560.

It localises to the cell membrane. This is an uncharacterized protein from Mycobacterium bovis (strain ATCC BAA-935 / AF2122/97).